Here is a 286-residue protein sequence, read N- to C-terminus: Pantothenate synthetase (286 aa).

30-37 (MGFLHEGH) lines the ATP pocket. H37 functions as the Proton donor in the catalytic mechanism. (R)-pantoate is bound at residue Q61. A beta-alanine-binding site is contributed by Q61. 147–150 (GLKD) contacts ATP. Q153 lines the (R)-pantoate pocket. Residues V176 and 184 to 187 (KSSR) contribute to the ATP site.

Belongs to the pantothenate synthetase family. As to quaternary structure, homodimer.

It is found in the cytoplasm. It carries out the reaction (R)-pantoate + beta-alanine + ATP = (R)-pantothenate + AMP + diphosphate + H(+). The protein operates within cofactor biosynthesis; (R)-pantothenate biosynthesis; (R)-pantothenate from (R)-pantoate and beta-alanine: step 1/1. Functionally, catalyzes the condensation of pantoate with beta-alanine in an ATP-dependent reaction via a pantoyl-adenylate intermediate. This chain is Pantothenate synthetase, found in Bacillus subtilis (strain 168).